The following is a 471-amino-acid chain: RuvB-like protein 2 (471 aa).

75–82 (GPPSTGKT) contributes to the ATP binding site.

The protein belongs to the RuvB family. As to quaternary structure, probably forms a homohexamer. Interacts with RVB1 and may form heterododecamers with RVB1. Component of the SWR1 chromatin remodeling complex composed of at least ACT1, ARP4, RVB1, RVB2, ARP6, YAF9, VPS71, VPS72, SWC3, SWC4, SWC5, SWC7 and SWR1, and perhaps BDF1. Component of the chromatin-remodeling INO80 complex, at least composed of ARP4, ARP5, ARP8, RVB1, RVB2, TAF14, NHP10, IES1, IES3, IES4, IES6, ACT1, IES2, IES5 and INO80. Also belongs to the R2TP complex composed of at least RVB1, RVB2, TAH1 and PIH1. Interacts with SPT15/TBP.

Its subcellular location is the nucleus. The protein localises to the nucleoplasm. It carries out the reaction ATP + H2O = ADP + phosphate + H(+). Functionally, DNA helicase which participates in several chromatin remodeling complexes, including the SWR1 and the INO80 complexes. The SWR1 complex mediates the ATP-dependent exchange of histone H2A for the H2A variant HZT1 leading to transcriptional regulation of selected genes by chromatin remodeling. The INO80 complex remodels chromatin by shifting nucleosomes. Its ability to induce transcription of some phosphate-responsive genes is modulated by inositol polyphosphates. The INO80 complex is involved in DNA repair by associating to 'Ser-129' phosphorylated H2A histones as a response to DNA damage. During transcription may recruit SPT15/TBP to the TATA-boxes of involved genes. Required for box C/D and box H/ACA snoRNA accumulation and involved in pre-rRNA processing. This Saccharomyces cerevisiae (strain ATCC 204508 / S288c) (Baker's yeast) protein is RuvB-like protein 2 (RVB2).